Consider the following 492-residue polypeptide: Histone-lysine N-methyltransferase PRDM7 (492 aa).

Residues 1–22 (MSPERSQEESPEGDTERTERKP) form a disordered region. In terms of domain architecture, KRAB-related spans 23–86 (MVKDAFKDIS…RRQAIKLQVD (64 aa)). The segment at 111-179 (EQSKHQKGMP…ELRRKETEGK (69 aa)) is disordered. The span at 135 to 150 (GTPNLLNTSDSEQAQK) shows a compositional bias: polar residues. Over residues 167-179 (LKLELRRKETEGK) the composition is skewed to basic and acidic residues. The SET domain occupies 244–358 (PGLRIGPSGI…PGCELLVWSG (115 aa)).

The protein resides in the nucleus. The protein localises to the chromosome. The enzyme catalyses N(6),N(6)-dimethyl-L-lysyl(4)-[histone H3] + S-adenosyl-L-methionine = N(6),N(6),N(6)-trimethyl-L-lysyl(4)-[histone H3] + S-adenosyl-L-homocysteine + H(+). Its function is as follows. Histone methyltransferase that selectively methylates 'Lys-4' of dimethylated histone H3 (H3K4me2) to produce trimethylated 'Lys-4' histone H3 (H3K4me3). May play a role in epigenetic regulation of gene expression by defining an active chromatin state. The polypeptide is Histone-lysine N-methyltransferase PRDM7 (Homo sapiens (Human)).